An 874-amino-acid chain; its full sequence is Probable inorganic carbon transporter subunit DabA (874 aa).

Zn(2+) is bound by residues C398, D400, H580, and C595.

It belongs to the inorganic carbon transporter (TC 9.A.2) DabA family. As to quaternary structure, forms a complex with DabB. The cofactor is Zn(2+).

It is found in the cell membrane. Functionally, part of an energy-coupled inorganic carbon pump. This chain is Probable inorganic carbon transporter subunit DabA, found in Bacillus cereus (strain 03BB102).